The primary structure comprises 262 residues: Cytochrome c oxidase subunit 3 (262 aa).

Transmembrane regions (helical) follow at residues 13-33, 38-58, 82-102, 134-154, 159-179, 200-220, and 237-257; these read PWPL…VMYM, GGGL…YVWW, GMLL…WAFF, TIIL…ILAG, GIIS…FQAL, ATGF…VCLF, and AAAW…VCIY.

It belongs to the cytochrome c oxidase subunit 3 family. As to quaternary structure, component of the cytochrome c oxidase (complex IV, CIV), a multisubunit enzyme composed of a catalytic core of 3 subunits and several supernumerary subunits. The complex exists as a monomer or a dimer and forms supercomplexes (SCs) in the inner mitochondrial membrane with ubiquinol-cytochrome c oxidoreductase (cytochrome b-c1 complex, complex III, CIII).

The protein localises to the mitochondrion inner membrane. It carries out the reaction 4 Fe(II)-[cytochrome c] + O2 + 8 H(+)(in) = 4 Fe(III)-[cytochrome c] + 2 H2O + 4 H(+)(out). In terms of biological role, component of the cytochrome c oxidase, the last enzyme in the mitochondrial electron transport chain which drives oxidative phosphorylation. The respiratory chain contains 3 multisubunit complexes succinate dehydrogenase (complex II, CII), ubiquinol-cytochrome c oxidoreductase (cytochrome b-c1 complex, complex III, CIII) and cytochrome c oxidase (complex IV, CIV), that cooperate to transfer electrons derived from NADH and succinate to molecular oxygen, creating an electrochemical gradient over the inner membrane that drives transmembrane transport and the ATP synthase. Cytochrome c oxidase is the component of the respiratory chain that catalyzes the reduction of oxygen to water. Electrons originating from reduced cytochrome c in the intermembrane space (IMS) are transferred via the dinuclear copper A center (CU(A)) of subunit 2 and heme A of subunit 1 to the active site in subunit 1, a binuclear center (BNC) formed by heme A3 and copper B (CU(B)). The BNC reduces molecular oxygen to 2 water molecules using 4 electrons from cytochrome c in the IMS and 4 protons from the mitochondrial matrix. The protein is Cytochrome c oxidase subunit 3 (COX3) of Prototheca wickerhamii.